The following is a 242-amino-acid chain: 3-deoxy-manno-octulosonate cytidylyltransferase (242 aa).

Belongs to the KdsB family.

The protein resides in the cytoplasm. It carries out the reaction 3-deoxy-alpha-D-manno-oct-2-ulosonate + CTP = CMP-3-deoxy-beta-D-manno-octulosonate + diphosphate. It functions in the pathway nucleotide-sugar biosynthesis; CMP-3-deoxy-D-manno-octulosonate biosynthesis; CMP-3-deoxy-D-manno-octulosonate from 3-deoxy-D-manno-octulosonate and CTP: step 1/1. Its pathway is bacterial outer membrane biogenesis; lipopolysaccharide biosynthesis. Functionally, activates KDO (a required 8-carbon sugar) for incorporation into bacterial lipopolysaccharide in Gram-negative bacteria. The sequence is that of 3-deoxy-manno-octulosonate cytidylyltransferase from Mesorhizobium japonicum (strain LMG 29417 / CECT 9101 / MAFF 303099) (Mesorhizobium loti (strain MAFF 303099)).